We begin with the raw amino-acid sequence, 122 residues long: Large ribosomal subunit protein uL14 (122 aa).

The protein belongs to the universal ribosomal protein uL14 family. As to quaternary structure, part of the 50S ribosomal subunit. Forms a cluster with proteins L3 and L19. In the 70S ribosome, L14 and L19 interact and together make contacts with the 16S rRNA in bridges B5 and B8.

Its function is as follows. Binds to 23S rRNA. Forms part of two intersubunit bridges in the 70S ribosome. The polypeptide is Large ribosomal subunit protein uL14 (Helicobacter hepaticus (strain ATCC 51449 / 3B1)).